The sequence spans 233 residues: uncharacterized protein (233 aa).

Residues N58, N77, N93, N102, N110, N120, and N155 are each glycosylated (N-linked (GlcNAc...) asparagine; by host). The segment covering 102–124 (NSSTTTTTNASSSDSSMYNTTRS) has biased composition (low complexity). Residues 102-132 (NSSTTTTTNASSSDSSMYNTTRSTQRRVTYD) are disordered. A helical membrane pass occupies residues 168–188 (FSLLQWVLVAALAFFMYYFLW).

It belongs to the ascovirus HvAv ORF58 family.

Its subcellular location is the membrane. This is an uncharacterized protein from Trichoplusia ni ascovirus 2c (TnAV-2c).